Consider the following 1503-residue polypeptide: ATP-binding cassette sub-family C member 6 (1503 aa).

Over 1–31 the chain is Extracellular; it reads MAAPAEPCAGQGVWNQTEPEPAATSLLSLCF. Residue N15 is glycosylated (N-linked (GlcNAc...) asparagine). The chain crosses the membrane as a helical span at residues 32-52; it reads LRTAGVWVPPMYLWVLGPIYL. Residues 53-72 are Cytoplasmic-facing; the sequence is LFIHHHGRGYLRMSPLFKAK. A helical membrane pass occupies residues 73–93; the sequence is MVLGFALIVLCTSSVAVALWK. At 94 to 98 the chain is on the extracellular side; the sequence is IQQGT. Residues 99–119 traverse the membrane as a helical segment; the sequence is PEAPEFLIHPTVWLTTMSFAV. The Cytoplasmic portion of the chain corresponds to 120 to 131; it reads FLIHTERKKGVQ. A helical transmembrane segment spans residues 132–149; that stretch reads SSGVLFGYWLLCFVLPAT. Topologically, residues 150–167 are extracellular; that stretch reads NAAQQASGAGFQSDPVRH. Residues 168 to 188 traverse the membrane as a helical segment; it reads LSTYLCLSLVVAQFVLSCLAD. Over 189 to 302 the chain is Cytoplasmic; it reads QPPFFPEDPQ…GSQWRPLLKA (114 aa). A helical transmembrane segment spans residues 303–323; that stretch reads IWQVFHSTFLLGTLSLIISDV. Residues 311 to 593 enclose the ABC transmembrane type-1 1 domain; sequence FLLGTLSLII…LPFSIHSLVQ (283 aa). The Extracellular portion of the chain corresponds to 324–349; that stretch reads FRFTVPKLLSLFLEFIGDPKPPAWKG. Residues 350-370 traverse the membrane as a helical segment; it reads YLLAVLMFLSACLQTLFEQQN. At 371 to 426 the chain is on the cytoplasmic side; the sequence is MYRLKVLQMRLRSAITGLVYRKVLALSSGSRKASAVGDVVNLVSVDVQRLTESVLY. Residues 427 to 447 form a helical membrane-spanning segment; sequence LNGLWLPLVWIVVCFVYLWQL. Topologically, residues 448 to 450 are extracellular; sequence LGP. A helical membrane pass occupies residues 451 to 471; that stretch reads SALTAIAVFLSLLPLNFFISK. Over 472–533 the chain is Cytoplasmic; it reads KRNHHQEEQM…ALRTSGLLFS (62 aa). The chain crosses the membrane as a helical span at residues 534–554; sequence VSLVSFQVSTFLVALVVFAVH. At 555–575 the chain is on the extracellular side; it reads TLVAENAMNAEKAFVTLTVLN. Residues 576 to 596 traverse the membrane as a helical segment; the sequence is ILNKAQAFLPFSIHSLVQARV. At 597 to 939 the chain is on the cytoplasmic side; the sequence is SFDRLVTFLC…VKATVHLAYL (343 aa). Residues 629–853 form the ABC transporter 1 domain; it reads ITIHSATFAW…KGALMCLLDQ (225 aa). ATP is bound at residue 663-670; the sequence is GPVGAGKS. Residues 854-919 are disordered; the sequence is ARQPGDRGEG…LDDPDRAGWP (66 aa). Residues 881–901 show a composition bias toward basic and acidic residues; that stretch reads RRPELRRERSIKSVPEKDRTT. A helical transmembrane segment spans residues 940–960; sequence RAVGTPLCLYALFLFLCQQVA. Positions 947-1228 constitute an ABC transmembrane type-1 2 domain; it reads CLYALFLFLC…VVRNWTDLEN (282 aa). The Extracellular segment spans residues 961–997; sequence SFCRGYWLSLWADDPAVGGQQTQAALRGGIFGLLGCL. Residues 998–1018 traverse the membrane as a helical segment; that stretch reads QAIGLFASMAAVLLGGARASR. At 1019 to 1061 the chain is on the cytoplasmic side; the sequence is LLFQRLLWDVVRSPISFFERTPIGHLLNRFSKETDTVDVDIPD. Residues 1062-1082 traverse the membrane as a helical segment; sequence KLRSLLMYAFGLLEVSLVVAV. A1083 is a topological domain (extracellular). A helical membrane pass occupies residues 1084 to 1104; that stretch reads TPLATVAILPLFLLYAGFQSL. The Cytoplasmic portion of the chain corresponds to 1105–1175; it reads YVVSSCQLRR…VADRWLAANV (71 aa). The chain crosses the membrane as a helical span at residues 1176 to 1196; sequence ELLGNGLVFAAATCAVLSKAH. Topologically, residues 1197–1198 are extracellular; the sequence is LS. A helical transmembrane segment spans residues 1199–1219; sequence AGLVGFSVSAALQVTQTLQWV. The Cytoplasmic segment spans residues 1220–1503; it reads VRNWTDLENS…YRLAQESGLV (284 aa). The ABC transporter 2 domain maps to 1265 to 1499; that stretch reads IEFRDFGLRY…KGLFYRLAQE (235 aa). S1286 carries the phosphoserine modification. Residue 1299–1306 coordinates ATP; the sequence is GRTGAGKS.

Belongs to the ABC transporter superfamily. ABCC family. Conjugate transporter (TC 3.A.1.208) subfamily. The cofactor is Mg(2+). Glycosylated. Expressed in kidney and liver. Very low expression in other tissues. In testis, localized to peritubular myoid cells, Leydig cells, along the basal membrane of Sertoli cells and moderately in the adluminal compartment of the seminiferous tubules.

It localises to the basal cell membrane. Its subcellular location is the basolateral cell membrane. The protein resides in the endoplasmic reticulum membrane. The catalysed reaction is an S-substituted glutathione(in) + ATP + H2O = an S-substituted glutathione(out) + ADP + phosphate + H(+). The enzyme catalyses leukotriene C4(in) + ATP + H2O = leukotriene C4(out) + ADP + phosphate + H(+). With respect to regulation, LTC4 transport is completely inhibited by 1 mM orthovanadate. ATP-dependent transporter of the ATP-binding cassette (ABC) family that actively extrudes physiological compounds, and xenobiotics from cells. Mediates ATP-dependent transport of glutathione conjugates such as leukotriene-c4 (LTC4) and N-ethylmaleimide S-glutathione (NEM-GS) (in vitro), and an anionic cyclopentapeptide endothelin antagonist, BQ-123. May contribute to regulate the transport of organic compounds in testes across the blood-testis-barrier. Does not appear to actively transport drugs outside the cell. Confers low levels of cellular resistance to etoposide, teniposide, anthracyclines and cisplatin. Its function is as follows. Mediates the release of nucleoside triphosphates, predominantly ATP, into the circulation, where it is rapidly converted into AMP and the mineralization inhibitor inorganic pyrophosphate (PPi) by the ecto-enzyme ectonucleotide pyrophosphatase phosphodiesterase 1 (ENPP1), therefore playing a role in PPi homeostasis. Functionally, inhibits TNF-alpha-mediated apoptosis through blocking one or more caspases. In Homo sapiens (Human), this protein is ATP-binding cassette sub-family C member 6 (ABCC6).